Reading from the N-terminus, the 68-residue chain is MGMRMMFTVFLLVVLATTVVSFTSDRASEGRNAAAKDKASDLVALTVRGCCAIRECRLQNAAYCGGIY.

The signal sequence occupies residues 1-21; the sequence is MGMRMMFTVFLLVVLATTVVS. Residues 22-48 constitute a propeptide that is removed on maturation; that stretch reads FTSDRASEGRNAAAKDKASDLVALTVR. Intrachain disulfides connect C50–C56 and C51–C64. The lacks the Ser-Xaa-Pro motif that is crucial for potent interaction with nAChR stretch occupies residues 52–54; the sequence is AIR. Y63 is modified (sulfotyrosine). Cysteine amide is present on C64. The propeptide occupies 65 to 68; that stretch reads GGIY.

Belongs to the conotoxin A superfamily. As to expression, expressed by the venom duct.

The protein localises to the secreted. Its function is as follows. Alpha-conotoxins act on postsynaptic membranes, they bind to the nicotinic acetylcholine receptors (nAChR) and thus inhibit them. Has possibly a distinct nAChR binding mode from other alpha-conotoxins, due to a different three residue motif (lacks the Ser-Xaa-Pro motif). The chain is Alpha-conotoxin-like Ca1.2 from Conus caracteristicus (Characteristic cone).